A 436-amino-acid chain; its full sequence is Trigger factor (436 aa).

Positions 161–246 (EDQLNIDFVG…VNSVSEPKLP (86 aa)) constitute a PPIase FKBP-type domain.

Belongs to the FKBP-type PPIase family. Tig subfamily.

The protein localises to the cytoplasm. It catalyses the reaction [protein]-peptidylproline (omega=180) = [protein]-peptidylproline (omega=0). Involved in protein export. Acts as a chaperone by maintaining the newly synthesized protein in an open conformation. Functions as a peptidyl-prolyl cis-trans isomerase. This Pseudomonas fluorescens (strain SBW25) protein is Trigger factor.